A 216-amino-acid chain; its full sequence is Pyrophosphatase PpaX (216 aa).

The active-site Nucleophile is the aspartate 9.

The protein belongs to the HAD-like hydrolase superfamily. PpaX family. Mg(2+) is required as a cofactor.

The catalysed reaction is diphosphate + H2O = 2 phosphate + H(+). In terms of biological role, hydrolyzes pyrophosphate formed during P-Ser-HPr dephosphorylation by HPrK/P. Might play a role in controlling the intracellular pyrophosphate pool. This chain is Pyrophosphatase PpaX, found in Bacillus anthracis (strain CDC 684 / NRRL 3495).